The chain runs to 141 residues: Large ribosomal subunit protein uL16 (141 aa).

The interval 1–21 (MLMPKRVKYRKQQRGHNRGMA) is disordered.

Belongs to the universal ribosomal protein uL16 family. Part of the 50S ribosomal subunit.

Functionally, binds 23S rRNA and is also seen to make contacts with the A and possibly P site tRNAs. The protein is Large ribosomal subunit protein uL16 of Roseiflexus sp. (strain RS-1).